A 355-amino-acid chain; its full sequence is uncharacterized protein (355 aa).

A chloroplast-targeting transit peptide spans 1–49 (MPMTVVSGRFSTALLPTCFSLSRLHSVKYAAQRRVVFVSRSAHASSASV).

This sequence belongs to the methyltransferase superfamily.

The protein localises to the plastid. Its subcellular location is the chloroplast. The protein resides in the plastoglobule. This is an uncharacterized protein from Arabidopsis thaliana (Mouse-ear cress).